The following is a 331-amino-acid chain: 4-hydroxythreonine-4-phosphate dehydrogenase (331 aa).

Substrate contacts are provided by His136 and Thr137. A divalent metal cation contacts are provided by His166, His211, and His266. 3 residues coordinate substrate: Lys274, Asn283, and Arg292.

Belongs to the PdxA family. As to quaternary structure, homodimer. It depends on Zn(2+) as a cofactor. Requires Mg(2+) as cofactor. Co(2+) is required as a cofactor.

The protein localises to the cytoplasm. The catalysed reaction is 4-(phosphooxy)-L-threonine + NAD(+) = 3-amino-2-oxopropyl phosphate + CO2 + NADH. The protein operates within cofactor biosynthesis; pyridoxine 5'-phosphate biosynthesis; pyridoxine 5'-phosphate from D-erythrose 4-phosphate: step 4/5. Catalyzes the NAD(P)-dependent oxidation of 4-(phosphooxy)-L-threonine (HTP) into 2-amino-3-oxo-4-(phosphooxy)butyric acid which spontaneously decarboxylates to form 3-amino-2-oxopropyl phosphate (AHAP). In Thioalkalivibrio sulfidiphilus (strain HL-EbGR7), this protein is 4-hydroxythreonine-4-phosphate dehydrogenase.